The primary structure comprises 739 residues: Gamma-tubulin complex component 4 homolog (739 aa).

It belongs to the TUBGCP family.

Its subcellular location is the cytoplasm. The protein resides in the cytoskeleton. The protein localises to the microtubule organizing center. Functionally, gamma-tubulin complex is necessary for microtubule nucleation at the microtubule organizing centers (MTOCs). The polypeptide is Gamma-tubulin complex component 4 homolog (85P) (Medicago truncatula (Barrel medic)).